Here is a 484-residue protein sequence, read N- to C-terminus: tRNA sulfurtransferase (484 aa).

One can recognise a THUMP domain in the interval 63–167 (QAFGERLACI…RDNLYMVTKR (105 aa)). Residues 185–186 (LI), Lys-267, Gly-289, and Gln-298 contribute to the ATP site. Residues Cys-346 and Cys-458 are joined by a disulfide bond. Residues 406 to 484 (IDTNQVVIDI…GYTNVKVYRP (79 aa)) enclose the Rhodanese domain. Catalysis depends on Cys-458, which acts as the Cysteine persulfide intermediate.

This sequence belongs to the ThiI family.

The protein resides in the cytoplasm. The catalysed reaction is [ThiI sulfur-carrier protein]-S-sulfanyl-L-cysteine + a uridine in tRNA + 2 reduced [2Fe-2S]-[ferredoxin] + ATP + H(+) = [ThiI sulfur-carrier protein]-L-cysteine + a 4-thiouridine in tRNA + 2 oxidized [2Fe-2S]-[ferredoxin] + AMP + diphosphate. It carries out the reaction [ThiS sulfur-carrier protein]-C-terminal Gly-Gly-AMP + S-sulfanyl-L-cysteinyl-[cysteine desulfurase] + AH2 = [ThiS sulfur-carrier protein]-C-terminal-Gly-aminoethanethioate + L-cysteinyl-[cysteine desulfurase] + A + AMP + 2 H(+). It functions in the pathway cofactor biosynthesis; thiamine diphosphate biosynthesis. Its function is as follows. Catalyzes the ATP-dependent transfer of a sulfur to tRNA to produce 4-thiouridine in position 8 of tRNAs, which functions as a near-UV photosensor. Also catalyzes the transfer of sulfur to the sulfur carrier protein ThiS, forming ThiS-thiocarboxylate. This is a step in the synthesis of thiazole, in the thiamine biosynthesis pathway. The sulfur is donated as persulfide by IscS. The sequence is that of tRNA sulfurtransferase from Shewanella baltica (strain OS155 / ATCC BAA-1091).